A 338-amino-acid polypeptide reads, in one-letter code: 4-hydroxythreonine-4-phosphate dehydrogenase (338 aa).

Substrate-binding residues include histidine 136 and threonine 137. Residues histidine 173, histidine 218, and histidine 273 each contribute to the a divalent metal cation site. Substrate is bound by residues lysine 281, asparagine 290, and arginine 299.

This sequence belongs to the PdxA family. Homodimer. Requires Zn(2+) as cofactor. It depends on Mg(2+) as a cofactor. Co(2+) is required as a cofactor.

It is found in the cytoplasm. The enzyme catalyses 4-(phosphooxy)-L-threonine + NAD(+) = 3-amino-2-oxopropyl phosphate + CO2 + NADH. It functions in the pathway cofactor biosynthesis; pyridoxine 5'-phosphate biosynthesis; pyridoxine 5'-phosphate from D-erythrose 4-phosphate: step 4/5. Functionally, catalyzes the NAD(P)-dependent oxidation of 4-(phosphooxy)-L-threonine (HTP) into 2-amino-3-oxo-4-(phosphooxy)butyric acid which spontaneously decarboxylates to form 3-amino-2-oxopropyl phosphate (AHAP). The sequence is that of 4-hydroxythreonine-4-phosphate dehydrogenase from Ralstonia nicotianae (strain ATCC BAA-1114 / GMI1000) (Ralstonia solanacearum).